A 225-amino-acid chain; its full sequence is Large ribosomal subunit protein eL15 (225 aa).

Positions 159–180 are disordered; sequence RPFRGLTSAGKKMRGLRKSRGL. Residues 169–180 are compositionally biased toward basic residues; the sequence is KKMRGLRKSRGL.

This sequence belongs to the eukaryotic ribosomal protein eL15 family.

This chain is Large ribosomal subunit protein eL15 (rpl15e), found in Aeropyrum pernix (strain ATCC 700893 / DSM 11879 / JCM 9820 / NBRC 100138 / K1).